The primary structure comprises 137 residues: Ribosome-binding factor A (137 aa).

It belongs to the RbfA family. In terms of assembly, monomer. Binds 30S ribosomal subunits, but not 50S ribosomal subunits or 70S ribosomes.

It is found in the cytoplasm. In terms of biological role, one of several proteins that assist in the late maturation steps of the functional core of the 30S ribosomal subunit. Associates with free 30S ribosomal subunits (but not with 30S subunits that are part of 70S ribosomes or polysomes). Required for efficient processing of 16S rRNA. May interact with the 5'-terminal helix region of 16S rRNA. The chain is Ribosome-binding factor A from Trichodesmium erythraeum (strain IMS101).